Reading from the N-terminus, the 418-residue chain is Gamma-glutamyl phosphate reductase (418 aa).

This sequence belongs to the gamma-glutamyl phosphate reductase family.

It is found in the cytoplasm. It carries out the reaction L-glutamate 5-semialdehyde + phosphate + NADP(+) = L-glutamyl 5-phosphate + NADPH + H(+). Its pathway is amino-acid biosynthesis; L-proline biosynthesis; L-glutamate 5-semialdehyde from L-glutamate: step 2/2. Its function is as follows. Catalyzes the NADPH-dependent reduction of L-glutamate 5-phosphate into L-glutamate 5-semialdehyde and phosphate. The product spontaneously undergoes cyclization to form 1-pyrroline-5-carboxylate. This is Gamma-glutamyl phosphate reductase from Desulforapulum autotrophicum (strain ATCC 43914 / DSM 3382 / VKM B-1955 / HRM2) (Desulfobacterium autotrophicum).